Here is a 199-residue protein sequence, read N- to C-terminus: Single-stranded DNA-binding protein 2 (199 aa).

An SSB domain is found at 1-110; the sequence is MAGETVITVV…LDVDEVGASL (110 aa). Residues 114–199 are disordered; sequence TAKVTKTSGQ…GGGYSDEPPF (86 aa). The segment covering 123–156 has biased composition (gly residues); that stretch reads QGRGGQGGYGGGGGGQGGGGWGGGPGGGQQGGGA. Low complexity predominate over residues 157-166; the sequence is PADDPWATGG. A compositionally biased stretch (gly residues) spans 167-193; the sequence is APAGGQQGGGGQGGGGWGGGSGGGGGY.

Homotetramer. In terms of processing, phosphorylated on tyrosine residue(s) when expressed in E.coli.

It localises to the cytoplasm. Its subcellular location is the nucleoid. This Streptomyces coelicolor (strain ATCC BAA-471 / A3(2) / M145) protein is Single-stranded DNA-binding protein 2 (ssb2).